We begin with the raw amino-acid sequence, 442 residues long: Trigger factor (442 aa).

Residues 165–250 (DDTAQIDFEG…LHKILQKELP (86 aa)) form the PPIase FKBP-type domain.

The protein belongs to the FKBP-type PPIase family. Tig subfamily.

It is found in the cytoplasm. The enzyme catalyses [protein]-peptidylproline (omega=180) = [protein]-peptidylproline (omega=0). Functionally, involved in protein export. Acts as a chaperone by maintaining the newly synthesized protein in an open conformation. Functions as a peptidyl-prolyl cis-trans isomerase. The protein is Trigger factor of Helicobacter hepaticus (strain ATCC 51449 / 3B1).